Here is a 144-residue protein sequence, read N- to C-terminus: UPF0102 protein BURPS1106A_3900 (144 aa).

The tract at residues 1–28 (MCHAREASPGTGEPEAAPRDNFPRAAGS) is disordered.

The protein belongs to the UPF0102 family.

The sequence is that of UPF0102 protein BURPS1106A_3900 from Burkholderia pseudomallei (strain 1106a).